Consider the following 384-residue polypeptide: Iron(3+)-hydroxamate import system permease protein FhuB (384 aa).

9 consecutive transmembrane segments (helical) span residues 58-78, 115-135, 154-174, 176-196, 202-222, 243-263, 296-316, 330-350, and 357-377; these read GAVI…FLSI, TAAA…MQGM, FAVS…LVLW, FAGA…SRGG, LALA…AIAI, WSGV…AFFI, VILT…GLII, WIIP…DIAA, and FETP…FYLA.

The protein belongs to the binding-protein-dependent transport system permease family. FecCD subfamily. The complex is composed of an ATP-binding protein (FhuC), two transmembrane proteins (FhuB and FhuG) and a solute-binding protein (FhuD or YxeB).

The protein localises to the cell membrane. It localises to the membrane raft. Part of the ABC transporter complex FhuBGCD involved in iron(3+)-hydroxamate import. Responsible for the translocation of the substrate across the membrane. The polypeptide is Iron(3+)-hydroxamate import system permease protein FhuB (fhuB) (Bacillus subtilis (strain 168)).